The chain runs to 459 residues: UDP-glycosyltransferase 78D3 (459 aa).

UDP-alpha-D-glucose-binding positions include 338–340, 355–363, and 377–380; these read APQ, HGGWNSVLE, and FGDH.

It belongs to the UDP-glycosyltransferase family.

Functionally, possesses low quercetin 3-O-glucosyltransferase activity in vitro. The sequence is that of UDP-glycosyltransferase 78D3 (UGT78D3) from Arabidopsis thaliana (Mouse-ear cress).